The following is a 193-amino-acid chain: NADH-quinone oxidoreductase subunit B (193 aa).

[4Fe-4S] cluster contacts are provided by cysteine 72, cysteine 73, cysteine 137, and cysteine 167.

It belongs to the complex I 20 kDa subunit family. As to quaternary structure, NDH-1 is composed of 14 different subunits. Subunits NuoB, C, D, E, F, and G constitute the peripheral sector of the complex. [4Fe-4S] cluster serves as cofactor.

The protein localises to the cell inner membrane. The enzyme catalyses a quinone + NADH + 5 H(+)(in) = a quinol + NAD(+) + 4 H(+)(out). Functionally, NDH-1 shuttles electrons from NADH, via FMN and iron-sulfur (Fe-S) centers, to quinones in the respiratory chain. Couples the redox reaction to proton translocation (for every two electrons transferred, four hydrogen ions are translocated across the cytoplasmic membrane), and thus conserves the redox energy in a proton gradient. The polypeptide is NADH-quinone oxidoreductase subunit B (Brucella abortus (strain S19)).